The following is a 92-amino-acid chain: Small ribosomal subunit protein uS19 (92 aa).

Belongs to the universal ribosomal protein uS19 family.

Its function is as follows. Protein S19 forms a complex with S13 that binds strongly to the 16S ribosomal RNA. This is Small ribosomal subunit protein uS19 from Corynebacterium urealyticum (strain ATCC 43042 / DSM 7109).